The sequence spans 340 residues: Histidinol-phosphate aminotransferase (340 aa).

An N6-(pyridoxal phosphate)lysine modification is found at lysine 204.

This sequence belongs to the class-II pyridoxal-phosphate-dependent aminotransferase family. Histidinol-phosphate aminotransferase subfamily. It depends on pyridoxal 5'-phosphate as a cofactor.

The enzyme catalyses L-histidinol phosphate + 2-oxoglutarate = 3-(imidazol-4-yl)-2-oxopropyl phosphate + L-glutamate. It functions in the pathway amino-acid biosynthesis; L-histidine biosynthesis; L-histidine from 5-phospho-alpha-D-ribose 1-diphosphate: step 7/9. This is Histidinol-phosphate aminotransferase from Thermococcus gammatolerans (strain DSM 15229 / JCM 11827 / EJ3).